Consider the following 246-residue polypeptide: High mobility group protein 1 (246 aa).

A DNA-binding region (HMG box) is located at residues 106 to 179; it reads PKKPLTVFFA…NYQREKSKYL (74 aa). A disordered region spans residues 179 to 246; sequence LEAKKNGTLP…KKKDKSNSSI (68 aa). A compositionally biased stretch (basic and acidic residues) spans 214 to 227; the sequence is PVEKRPHDDDGSSE. Basic residues predominate over residues 228 to 238; the sequence is KKKKKKKKDKK.

As to quaternary structure, interacts with FPR1. Interacts with an unidentified DNA helicase. Associates with rDNA.

The protein resides in the nucleus. It is found in the nucleolus. Its function is as follows. DNA-binding protein that is probably part of the rDNA transcription apparatus. Acts synergetically with the RPA49 subunit of RNA polymerase I during rDNA transcription. May participate in mutagenesis control. The protein is High mobility group protein 1 (HMO1) of Saccharomyces cerevisiae (strain ATCC 204508 / S288c) (Baker's yeast).